Here is an 876-residue protein sequence, read N- to C-terminus: Alanine--tRNA ligase (876 aa).

Residues H566, H570, C668, and H672 each coordinate Zn(2+).

The protein belongs to the class-II aminoacyl-tRNA synthetase family. It depends on Zn(2+) as a cofactor.

It localises to the cytoplasm. The catalysed reaction is tRNA(Ala) + L-alanine + ATP = L-alanyl-tRNA(Ala) + AMP + diphosphate. Catalyzes the attachment of alanine to tRNA(Ala) in a two-step reaction: alanine is first activated by ATP to form Ala-AMP and then transferred to the acceptor end of tRNA(Ala). Also edits incorrectly charged Ser-tRNA(Ala) and Gly-tRNA(Ala) via its editing domain. This is Alanine--tRNA ligase from Petrotoga mobilis (strain DSM 10674 / SJ95).